The chain runs to 432 residues: Probable cysteine protease ATG4 (432 aa).

The disordered stretch occupies residues 74-97; sequence SRDTQAALSKPATPPHQLGIQRSK. C160 (nucleophile) is an active-site residue. Catalysis depends on residues D332 and H334.

Belongs to the peptidase C54 family.

The protein resides in the cytoplasm. Its subcellular location is the nucleus. It is found in the preautophagosomal structure. The enzyme catalyses [protein]-C-terminal L-amino acid-glycyl-phosphatidylethanolamide + H2O = [protein]-C-terminal L-amino acid-glycine + a 1,2-diacyl-sn-glycero-3-phosphoethanolamine. Functionally, cysteine protease that plays a key role in cytoplasm to vacuole transport (Cvt) and autophagy by mediating both proteolytic activation and delipidation of ATG8. Required for selective autophagic degradation of the nucleus (nucleophagy) as well as for mitophagy which contributes to regulate mitochondrial quantity and quality by eliminating the mitochondria to a basal level to fulfill cellular energy requirements and preventing excess ROS production. The protease activity is required for proteolytic activation of ATG8: cleaves the C-terminal amino acid of ATG8 to reveal a C-terminal glycine. ATG8 ubiquitin-like activity requires the exposure of the glycine at the C-terminus for its conjugation to phosphatidylethanolamine (PE) and its insertion to membranes, which is necessary for autophagy. The ATG8-PE conjugate mediates tethering between adjacent membranes and stimulates membrane hemifusion, leading to expansion of the autophagosomal membrane during autophagy. In addition to the protease activity, also catalyzes deconjugation of PE-conjugated forms of ATG8 during macroautophagy: ATG8 delipidation is required to release the protein from membranes, which facilitates multiple events during macroautophagy, and especially for efficient autophagosome biogenesis, the assembly of ATG9-containing tubulovesicular clusters into phagophores/autophagosomes, and for the disassembly of PAS-associated ATG components. ATG8 delipidation by ATG4 also recycles ATG8-PE generated on inappropriate membranes to maintain a reservoir of unlipidated ATG8 that is required for autophagosome formation at the PAS. This chain is Probable cysteine protease ATG4 (ATG4), found in Coccidioides immitis (strain RS) (Valley fever fungus).